The primary structure comprises 66 residues: Large ribosomal subunit protein bL33c (66 aa).

This sequence belongs to the bacterial ribosomal protein bL33 family.

It is found in the plastid. It localises to the chloroplast. The chain is Large ribosomal subunit protein bL33c from Platanus occidentalis (Sycamore).